Here is a 596-residue protein sequence, read N- to C-terminus: Malto-oligosyltrehalose trehalohydrolase (596 aa).

Arg263–His268 provides a ligand contact to substrate. Catalysis depends on Asp265, which acts as the Nucleophile. Glu302 acts as the Proton donor in catalysis. Residues Asp327–His331 and His397–Asn402 each bind substrate.

Belongs to the glycosyl hydrolase 13 family.

It localises to the cytoplasm. It carries out the reaction hydrolysis of (1-&gt;4)-alpha-D-glucosidic linkage in 4-alpha-D-[(1-&gt;4)-alpha-D-glucanosyl]n trehalose to yield trehalose and (1-&gt;4)-alpha-D-glucan.. It participates in glycan biosynthesis; trehalose biosynthesis. This Rhizobium sp. (strain M-11) protein is Malto-oligosyltrehalose trehalohydrolase (treZ).